We begin with the raw amino-acid sequence, 487 residues long: Bifunctional protein GlmU (487 aa).

The pyrophosphorylase stretch occupies residues 1 to 232 (MAVIVLAAGA…AAELAGVNDR (232 aa)). Residues 6–9 (LAAG), Lys-20, Gln-77, and 82–83 (GT) contribute to the UDP-N-acetyl-alpha-D-glucosamine site. Asp-107 contacts Mg(2+). UDP-N-acetyl-alpha-D-glucosamine-binding residues include Gly-142, Glu-157, Asn-172, and Asn-230. A Mg(2+)-binding site is contributed by Asn-230. The linker stretch occupies residues 233–253 (VQLAAAGAELNRRTVTAAMRG). An N-acetyltransferase region spans residues 254-487 (GATIVDPATT…PTSTPQADQE (234 aa)). UDP-N-acetyl-alpha-D-glucosamine contacts are provided by Arg-335 and Lys-353. The Proton acceptor role is filled by His-365. 2 residues coordinate UDP-N-acetyl-alpha-D-glucosamine: Tyr-368 and Asn-379. Acetyl-CoA-binding positions include Ala-382, 388 to 389 (NY), Ser-407, and Ala-425. Positions 453-487 (AKKRPGTPAAEAGEAAAKRVAEGGSPTSTPQADQE) are disordered. Polar residues predominate over residues 477-487 (SPTSTPQADQE).

In the N-terminal section; belongs to the N-acetylglucosamine-1-phosphate uridyltransferase family. The protein in the C-terminal section; belongs to the transferase hexapeptide repeat family. As to quaternary structure, homotrimer. Mg(2+) serves as cofactor.

Its subcellular location is the cytoplasm. The catalysed reaction is alpha-D-glucosamine 1-phosphate + acetyl-CoA = N-acetyl-alpha-D-glucosamine 1-phosphate + CoA + H(+). It carries out the reaction N-acetyl-alpha-D-glucosamine 1-phosphate + UTP + H(+) = UDP-N-acetyl-alpha-D-glucosamine + diphosphate. Its pathway is nucleotide-sugar biosynthesis; UDP-N-acetyl-alpha-D-glucosamine biosynthesis; N-acetyl-alpha-D-glucosamine 1-phosphate from alpha-D-glucosamine 6-phosphate (route II): step 2/2. It functions in the pathway nucleotide-sugar biosynthesis; UDP-N-acetyl-alpha-D-glucosamine biosynthesis; UDP-N-acetyl-alpha-D-glucosamine from N-acetyl-alpha-D-glucosamine 1-phosphate: step 1/1. The protein operates within bacterial outer membrane biogenesis; LPS lipid A biosynthesis. Functionally, catalyzes the last two sequential reactions in the de novo biosynthetic pathway for UDP-N-acetylglucosamine (UDP-GlcNAc). The C-terminal domain catalyzes the transfer of acetyl group from acetyl coenzyme A to glucosamine-1-phosphate (GlcN-1-P) to produce N-acetylglucosamine-1-phosphate (GlcNAc-1-P), which is converted into UDP-GlcNAc by the transfer of uridine 5-monophosphate (from uridine 5-triphosphate), a reaction catalyzed by the N-terminal domain. This Corynebacterium jeikeium (strain K411) protein is Bifunctional protein GlmU.